Consider the following 186-residue polypeptide: Large ribosomal subunit protein uL5 (186 aa).

This sequence belongs to the universal ribosomal protein uL5 family. In terms of assembly, part of the 50S ribosomal subunit; part of the 5S rRNA/L5/L18/L25 subcomplex. Contacts the 5S rRNA and the P site tRNA. Forms a bridge to the 30S subunit in the 70S ribosome.

This is one of the proteins that bind and probably mediate the attachment of the 5S RNA into the large ribosomal subunit, where it forms part of the central protuberance. In the 70S ribosome it contacts protein S13 of the 30S subunit (bridge B1b), connecting the 2 subunits; this bridge is implicated in subunit movement. Contacts the P site tRNA; the 5S rRNA and some of its associated proteins might help stabilize positioning of ribosome-bound tRNAs. This is Large ribosomal subunit protein uL5 from Maricaulis maris (strain MCS10) (Caulobacter maris).